The sequence spans 273 residues: Phosphate import ATP-binding protein PstB (273 aa).

The region spanning 27 to 268 is the ABC transporter domain; the sequence is VTVRNLNFYY…PSDRRTQDYI (242 aa). 59-66 provides a ligand contact to ATP; the sequence is GPSGCGKS.

This sequence belongs to the ABC transporter superfamily. Phosphate importer (TC 3.A.1.7) family. The complex is composed of two ATP-binding proteins (PstB), two transmembrane proteins (PstC and PstA) and a solute-binding protein (PstS).

The protein localises to the cell inner membrane. It catalyses the reaction phosphate(out) + ATP + H2O = ADP + 2 phosphate(in) + H(+). Its function is as follows. Part of the ABC transporter complex PstSACB involved in phosphate import. Responsible for energy coupling to the transport system. The polypeptide is Phosphate import ATP-binding protein PstB (Bradyrhizobium diazoefficiens (strain JCM 10833 / BCRC 13528 / IAM 13628 / NBRC 14792 / USDA 110)).